A 285-amino-acid chain; its full sequence is Bifunctional protein FolD (285 aa).

NADP(+) is bound by residues 165 to 167 and serine 190; that span reads GRS.

Belongs to the tetrahydrofolate dehydrogenase/cyclohydrolase family. As to quaternary structure, homodimer.

The catalysed reaction is (6R)-5,10-methylene-5,6,7,8-tetrahydrofolate + NADP(+) = (6R)-5,10-methenyltetrahydrofolate + NADPH. The enzyme catalyses (6R)-5,10-methenyltetrahydrofolate + H2O = (6R)-10-formyltetrahydrofolate + H(+). The protein operates within one-carbon metabolism; tetrahydrofolate interconversion. In terms of biological role, catalyzes the oxidation of 5,10-methylenetetrahydrofolate to 5,10-methenyltetrahydrofolate and then the hydrolysis of 5,10-methenyltetrahydrofolate to 10-formyltetrahydrofolate. The protein is Bifunctional protein FolD of Streptococcus pneumoniae (strain ATCC BAA-255 / R6).